A 251-amino-acid chain; its full sequence is Triosephosphate isomerase (251 aa).

Residue 9-11 (NWK) coordinates substrate. Residue His96 is the Electrophile of the active site. Glu167 functions as the Proton acceptor in the catalytic mechanism. Substrate contacts are provided by residues Gly173, Ser213, and 234-235 (GG).

The protein belongs to the triosephosphate isomerase family. Homodimer.

The protein resides in the cytoplasm. The catalysed reaction is D-glyceraldehyde 3-phosphate = dihydroxyacetone phosphate. It functions in the pathway carbohydrate biosynthesis; gluconeogenesis. It participates in carbohydrate degradation; glycolysis; D-glyceraldehyde 3-phosphate from glycerone phosphate: step 1/1. Its function is as follows. Involved in the gluconeogenesis. Catalyzes stereospecifically the conversion of dihydroxyacetone phosphate (DHAP) to D-glyceraldehyde-3-phosphate (G3P). This Bacteroides fragilis (strain ATCC 25285 / DSM 2151 / CCUG 4856 / JCM 11019 / LMG 10263 / NCTC 9343 / Onslow / VPI 2553 / EN-2) protein is Triosephosphate isomerase.